A 279-amino-acid chain; its full sequence is Small ribosomal subunit protein uS2 (279 aa).

The disordered stretch occupies residues 232-260; that stretch reads KVDMEAAGENAPKGAGKKKNTKARMDKAE.

It belongs to the universal ribosomal protein uS2 family.

The sequence is that of Small ribosomal subunit protein uS2 from Phocaeicola vulgatus (strain ATCC 8482 / DSM 1447 / JCM 5826 / CCUG 4940 / NBRC 14291 / NCTC 11154) (Bacteroides vulgatus).